Reading from the N-terminus, the 125-residue chain is Small ribosomal subunit protein uS12m (125 aa).

A disordered region spans residues 1–51 (MPTKNQLIRHGREEKRRTDRTRALDQCPQKQGVCPRVSTRTPKKPNSAPRK). Residues 10 to 23 (HGREEKRRTDRTRA) are compositionally biased toward basic and acidic residues.

This sequence belongs to the universal ribosomal protein uS12 family.

Its subcellular location is the mitochondrion. Functionally, protein S12 is involved in the translation initiation step. This Nicotiana sylvestris (Wood tobacco) protein is Small ribosomal subunit protein uS12m (RPS12).